Here is an 867-residue protein sequence, read N- to C-terminus: Protein translocase subunit SecA 1 (867 aa).

Residues glutamine 86, 104-108 (GEGKT), and aspartate 493 each bind ATP.

It belongs to the SecA family. As to quaternary structure, monomer and homodimer. Part of the essential Sec protein translocation apparatus which comprises SecA, SecYEG and auxiliary proteins SecDF. Other proteins may also be involved.

The protein localises to the cell membrane. Its subcellular location is the cytoplasm. The catalysed reaction is ATP + H2O + cellular proteinSide 1 = ADP + phosphate + cellular proteinSide 2.. In terms of biological role, part of the Sec protein translocase complex. Interacts with the SecYEG preprotein conducting channel. Has a central role in coupling the hydrolysis of ATP to the transfer of proteins into and across the cell membrane, serving as an ATP-driven molecular motor driving the stepwise translocation of polypeptide chains across the membrane. This is Protein translocase subunit SecA 1 from Corynebacterium jeikeium (strain K411).